We begin with the raw amino-acid sequence, 79 residues long: Conotoxin VnMKLT1-01121 (79 aa).

Positions 1 to 22 (MKLTCMMIVAVLFLTAWTFVTA) are cleaved as a signal peptide. Positions 23–48 (DDSRNGLEYLFPKAHYEMNPEASKLN) are excised as a propeptide. Disulfide bonds link Cys-53–Cys-70, Cys-60–Cys-74, and Cys-69–Cys-78.

This sequence belongs to the conotoxin O1 superfamily. As to expression, expressed by the venom duct.

The protein resides in the secreted. The sequence is that of Conotoxin VnMKLT1-01121 from Conus ventricosus (Mediterranean cone).